An 870-amino-acid chain; its full sequence is Lysosomal cholesterol signaling protein (870 aa).

Residues 1–38 (MNSNLPAENLTIAVNMTKTLPTAVTHGFNSTNDPPSMS) lie on the Lumenal side of the membrane. Residues 1-370 (MNSNLPAENL…SAWLLTFPTM (370 aa)) form a PIN-like transporter region. Residues Asn-9, Asn-15, and Asn-29 are each glycosylated (N-linked (GlcNAc...) asparagine). Residues 39–59 (ITRLFPALLECFGIVLCGYIA) traverse the membrane as a helical segment. Residues Phe-43 and Tyr-57 each contribute to the cholesterol site. Over 60–79 (GRANVITSTQAKGLGNFVSR) the chain is Cytoplasmic. A helical transmembrane segment spans residues 80-100 (FALPALLFKNMVVLNFSNVDW). Over 101–104 (SFLY) the chain is Lumenal. The chain crosses the membrane as a helical span at residues 105 to 125 (SILIAKASVFFIVCVLTLLVA). Residues 126–133 (SPDSRFSK) are Cytoplasmic-facing. A discontinuously helical membrane pass occupies residues 134–154 (AGLFPIFATQSNDFALGYPIV). The Lumenal portion of the chain corresponds to 155 to 167 (EALYQTTYPEYLQ). The chain crosses the membrane as a helical span at residues 168-188 (YIYLVAPISLMMLNPIGFIFC). Residues 189–213 (EIQKWKDTQNASQNKIKIVGLGLLR) are Cytoplasmic-facing. Residues 214–234 (VLQNPIVFMVFIGIAFNFILD) traverse the membrane as a discontinuously helical segment. The Lumenal segment spans residues 235 to 243 (RKVPVYVEN). A discontinuously helical transmembrane segment spans residues 244–264 (FLDGLGNSFSGSALFYLGLTM). Topologically, residues 265 to 273 (VGKIKRLKK) are cytoplasmic. 3 residues coordinate cholesterol: Gly-266, Lys-267, and Ile-268. The helical transmembrane segment at 274–294 (SAFVVLILLITAKLLVLPLLC) threads the bilayer. Topologically, residues 295 to 315 (REMVELLDKGDSVVNHTSLSN) are lumenal. The N-linked (GlcNAc...) asparagine glycan is linked to Asn-309. Residues 316–336 (YAFLYGVFPVAPGVAIFATQF) traverse the membrane as a discontinuously helical segment. At 337 to 346 (NMEVEIITSG) the chain is on the cytoplasmic side. The chain crosses the membrane as a helical span at residues 347 to 367 (MVISTFVSAPIMYVSAWLLTF). Topologically, residues 368 to 381 (PTMDPKPLAYAIQN) are lumenal. The segment at 380–717 (QNVSFDISIV…FGIFGLDKHL (338 aa)) is GPCR. Asn-381 carries N-linked (GlcNAc...) asparagine glycosylation. The chain crosses the membrane as a helical span at residues 382–402 (VSFDISIVSLISLIWSLAILL). Residues 403-414 (LSKKYKQLPHML) are Cytoplasmic-facing. The helical transmembrane segment at 415 to 435 (TTNLLIAQSIVCAGMMIWNFV) threads the bilayer. Residues 436–438 (KEK) lie on the Lumenal side of the membrane. A helical membrane pass occupies residues 439–459 (NFVGQILVFVLLYSSLYSTYL). Residues 460 to 480 (WTGLLAISLFLLKKRERVQIP) are Cytoplasmic-facing. Residues 481–501 (VGIIIISGWGIPALLVGVLLI) traverse the membrane as a helical segment. Residues 502–520 (TGKHNGDSIDSAFFYGKEQ) are Lumenal-facing. A helical transmembrane segment spans residues 521 to 541 (MITTAVTLFCSILIAGISLMC). The Cytoplasmic segment spans residues 542 to 660 (MNQTAQAGSY…GDQQLTRHVL (119 aa)). Arg-657 is a cholesterol binding site. A helical transmembrane segment spans residues 661 to 681 (LCLLLIIGLFANLSSCLWWLF). The Lumenal segment spans residues 682-691 (NQEPGRLYVE). Residues 692-712 (LQFFCAVFNFGQGFISFGIFG) traverse the membrane as a helical segment. Residues 713–870 (LDKHLIILPF…SSPPSHSPKT (158 aa)) are Cytoplasmic-facing. A DEP domain is found at 757–835 (YHRDLCIRNI…DEYLFYRFLQ (79 aa)).

As to quaternary structure, homodimer; via the transporter region and DEP domain. Interacts with the GATOR1 complex and prevents interaction between GATOR1 and KICSTOR; this interaction is disrupted upon cholesterol starvation.

Its subcellular location is the lysosome membrane. In terms of biological role, cholesterol-binding protein that acts as a regulator of mTORC1 signaling pathway. Acts as a sensor of cholesterol to signal cholesterol sufficiency to mTORC1: in presence of cholesterol, binds cholesterol, leading to disruption of the interaction between the GATOR1 and KICSTOR complexes and promotion of mTORC1 signaling. Upon cholesterol starvation, GPR155/LYCHOS is unable to perturb the association between GATOR1 and KICSTOR, leading to mTORC1 signaling inhibition. Binds indole-3-acetic acid and may play a role in tryptophan metabolism. In Homo sapiens (Human), this protein is Lysosomal cholesterol signaling protein.